Reading from the N-terminus, the 86-residue chain is Small ribosomal subunit protein uS17 (86 aa).

Belongs to the universal ribosomal protein uS17 family. As to quaternary structure, part of the 30S ribosomal subunit.

In terms of biological role, one of the primary rRNA binding proteins, it binds specifically to the 5'-end of 16S ribosomal RNA. This is Small ribosomal subunit protein uS17 from Bifidobacterium adolescentis (strain ATCC 15703 / DSM 20083 / NCTC 11814 / E194a).